Here is a 508-residue protein sequence, read N- to C-terminus: Lysine--tRNA ligase (508 aa).

Residues Glu-418 and Glu-425 each contribute to the Mg(2+) site.

Belongs to the class-II aminoacyl-tRNA synthetase family. In terms of assembly, homodimer. Mg(2+) serves as cofactor.

The protein resides in the cytoplasm. It carries out the reaction tRNA(Lys) + L-lysine + ATP = L-lysyl-tRNA(Lys) + AMP + diphosphate. This Burkholderia multivorans (strain ATCC 17616 / 249) protein is Lysine--tRNA ligase.